Consider the following 95-residue polypeptide: MTKSELIEKLAMRQSQLSAKEVESAIKEMLEQMAQTLEGGDRIEIRGFGSFSLHFRAPRTGRNPKTGTSVELDGKYVPHFKPGKELRERVDAINV.

Residues 56–76 (RAPRTGRNPKTGTSVELDGKY) are disordered.

Belongs to the bacterial histone-like protein family. As to quaternary structure, heterodimer of an alpha and a beta chain.

In terms of biological role, this protein is one of the two subunits of integration host factor, a specific DNA-binding protein that functions in genetic recombination as well as in transcriptional and translational control. In Shewanella woodyi (strain ATCC 51908 / MS32), this protein is Integration host factor subunit beta.